The sequence spans 540 residues: Glucose-6-phosphate isomerase (540 aa).

Catalysis depends on Glu350, which acts as the Proton donor. Residues His381 and Lys503 contribute to the active site.

The protein belongs to the GPI family.

Its subcellular location is the cytoplasm. It catalyses the reaction alpha-D-glucose 6-phosphate = beta-D-fructose 6-phosphate. It participates in carbohydrate biosynthesis; gluconeogenesis. Its pathway is carbohydrate degradation; glycolysis; D-glyceraldehyde 3-phosphate and glycerone phosphate from D-glucose: step 2/4. In terms of biological role, catalyzes the reversible isomerization of glucose-6-phosphate to fructose-6-phosphate. The chain is Glucose-6-phosphate isomerase from Burkholderia pseudomallei (strain 1106a).